An 82-amino-acid polypeptide reads, in one-letter code: UPF0335 protein pRhico085 (82 aa).

Belongs to the UPF0335 family.

This chain is UPF0335 protein pRhico085, found in Azospirillum brasilense.